The chain runs to 472 residues: Probable endopolygalacturonase D (472 aa).

Positions 1–16 (MKRGALLVPFVPLALA) are cleaved as a signal peptide. Residue N24 is glycosylated (N-linked (GlcNAc...) asparagine). C129 and C144 are oxidised to a cystine. PbH1 repeat units follow at residues 236–258 (MYYSRIENLNIQNWPVHCFDIEH), 259–297 (TENLIISGITLDNSAGDAPNSASGSKPAAHNSDGFDIKS), and 298–319 (STNLTLQNSWVHNQDDCVAVSS). N-linked (GlcNAc...) asparagine glycosylation occurs at N300. The Proton donor role is filled by D312. C314 and C330 are joined by a disulfide. H334 is an active-site residue. PbH1 repeat units lie at residues 349-370 (VDGVTFSNSQVINSSNGCRIKS), 378-400 (VSNIRYENITVSGITDYGIDIQQ), 412-433 (TNGVKIENITFVDVTGTMSDGK), and 444-467 (CSNFVFENVGITGGSGDSCNYPTD). N-linked (GlcNAc...) asparagine glycans are attached at residues N361, N385, and N419. 2 cysteine pairs are disulfide-bonded: C439/C444 and C462/C469.

It belongs to the glycosyl hydrolase 28 family.

It is found in the secreted. It catalyses the reaction (1,4-alpha-D-galacturonosyl)n+m + H2O = (1,4-alpha-D-galacturonosyl)n + (1,4-alpha-D-galacturonosyl)m.. Involved in maceration and soft-rotting of plant tissue. Hydrolyzes the 1,4-alpha glycosidic bonds of de-esterified pectate in the smooth region of the plant cell wall. This is Probable endopolygalacturonase D (pgaD) from Neosartorya fischeri (strain ATCC 1020 / DSM 3700 / CBS 544.65 / FGSC A1164 / JCM 1740 / NRRL 181 / WB 181) (Aspergillus fischerianus).